The sequence spans 781 residues: Ubiquitin carboxyl-terminal hydrolase 14 (781 aa).

The segment at 169-279 (STCPHTENFQ…SALQIYGINI (111 aa)) adopts a UBP-type zinc-finger fold. 12 residues coordinate Zn(2+): C171, H173, C192, C195, C204, C207, C212, H224, H228, H235, C253, and C256. The 459-residue stretch at 323-781 (CGLINLGNSC…NGYIYFYTRC (459 aa)) folds into the USP domain. The Nucleophile role is filled by C332. UBA domains lie at 576–626 (DEDE…LFQH) and 649–689 (EVDE…VFNN). H737 acts as the Proton acceptor in catalysis.

The protein belongs to the peptidase C19 family.

The protein resides in the cytoplasm. The protein localises to the nucleus. It carries out the reaction Thiol-dependent hydrolysis of ester, thioester, amide, peptide and isopeptide bonds formed by the C-terminal Gly of ubiquitin (a 76-residue protein attached to proteins as an intracellular targeting signal).. In terms of biological role, required for the adaptation to the presence of glucose in the growth medium; mediates the degradation of enzymes involved in gluconeogenesis when cells are shifted to glucose-containing medium. Required for proteasome-dependent catabolite degradation of fructose-1,6-bisphosphatase (FBP1). Accelerates proteasomal breakdown of ubiquitinated proteins as it disassembles free ubiquitin chains that would compete with ubiquitinated proteins to bind to the proteasome. In Saccharomyces cerevisiae (strain ATCC 204508 / S288c) (Baker's yeast), this protein is Ubiquitin carboxyl-terminal hydrolase 14 (UBP14).